A 498-amino-acid chain; its full sequence is 4-aminobutyrate aminotransferase (498 aa).

Glycine 164–serine 165 provides a ligand contact to pyridoxal 5'-phosphate. Position 222 (arginine 222) interacts with substrate. Lysine 356 carries the post-translational modification N6-(pyridoxal phosphate)lysine. Threonine 381 contacts pyridoxal 5'-phosphate.

The protein belongs to the class-III pyridoxal-phosphate-dependent aminotransferase family. Homodimer. It depends on pyridoxal 5'-phosphate as a cofactor.

The protein resides in the cytoplasm. It carries out the reaction 4-aminobutanoate + 2-oxoglutarate = succinate semialdehyde + L-glutamate. Its function is as follows. Deaminates gamma-aminobutyric acid (GABA) to succinate-semialdehyde, which in turn is converted to succinate by the succinate semialdehyde dehydrogenase. Required for the degradation of GABA, which is important for utilization of GABA as nitrogen source. The sequence is that of 4-aminobutyrate aminotransferase (gatA) from Emericella nidulans (strain FGSC A4 / ATCC 38163 / CBS 112.46 / NRRL 194 / M139) (Aspergillus nidulans).